The sequence spans 178 residues: Large ribosomal subunit protein uL6 (178 aa).

Belongs to the universal ribosomal protein uL6 family. As to quaternary structure, part of the 50S ribosomal subunit.

In terms of biological role, this protein binds to the 23S rRNA, and is important in its secondary structure. It is located near the subunit interface in the base of the L7/L12 stalk, and near the tRNA binding site of the peptidyltransferase center. The polypeptide is Large ribosomal subunit protein uL6 (Helicobacter hepaticus (strain ATCC 51449 / 3B1)).